Consider the following 1159-residue polypeptide: Cation channel sperm-associated auxiliary subunit gamma (1159 aa).

An N-terminal signal peptide occupies residues 1-35; it reads MCGPAMFPAGPRWPRVRVLQVLWALLAVLLASRRL. Over 36-1065 the chain is Extracellular; sequence WAIKDFEECT…IHGLPLSPKR (1030 aa). 2 disulfide bridges follow: Cys-44/Cys-105 and Cys-159/Cys-165. Asn-102 carries an N-linked (GlcNAc...) asparagine glycan. Residue Asn-177 is glycosylated (N-linked (GlcNAc...) asparagine). Cys-288 and Cys-343 are oxidised to a cystine. The N-linked (GlcNAc...) asparagine glycan is linked to Asn-355. Residues Cys-394 and Cys-402 are joined by a disulfide bond. 2 N-linked (GlcNAc...) asparagine glycosylation sites follow: Asn-426 and Asn-574. Cystine bridges form between Cys-638–Cys-860, Cys-806–Cys-834, Cys-882–Cys-1046, Cys-909–Cys-918, and Cys-1010–Cys-1016. Residues 1066–1087 traverse the membrane as a helical segment; the sequence is ALFILMVSLSVFVGLVIFYIAF. Residues 1088 to 1159 lie on the Cytoplasmic side of the membrane; that stretch reads CLLWPLVVKG…KEAVERQLMT (72 aa). Residues 1138-1159 are disordered; it reads FSSRMTEDKAEPKEAVERQLMT. A compositionally biased stretch (basic and acidic residues) spans 1142 to 1159; that stretch reads MTEDKAEPKEAVERQLMT.

The protein belongs to the CATSPERG family. As to quaternary structure, component of the CatSper complex or CatSpermasome composed of the core pore-forming members CATSPER1, CATSPER2, CATSPER3 and CATSPER4 as well as auxiliary members CATSPERB, CATSPERG, CATSPERD, CATSPERE, CATSPERZ, SCLO6C1, TMEM249, TMEM262 and EFCAB9. HSPA1 may be an additional auxiliary complex member. The core complex members CATSPER1, CATSPER2, CATSPER3 and CATSPER4 form a heterotetrameric channel. The auxiliary CATSPERB, CATSPERG, CATSPERD and CATSPERE subunits form a pavilion-like structure over the pore which stabilizes the complex through interactions with CATSPER4, CATSPER3, CATSPER1 and CATSPER2 respectively. TMEM262/CATSPERH interacts with CATSPERB, further stabilizing the complex. C2CD6/CATSPERT interacts at least with CATSPERD and is required for targeting the CatSper complex in the flagellar membrane.

Its subcellular location is the cell projection. It localises to the cilium. The protein resides in the flagellum membrane. In terms of biological role, auxiliary component of the CatSper complex, a complex involved in sperm cell hyperactivation. Sperm cell hyperactivation is needed for sperm motility which is essential late in the preparation of sperm for fertilization. The polypeptide is Cation channel sperm-associated auxiliary subunit gamma (Macaca fascicularis (Crab-eating macaque)).